The primary structure comprises 661 residues: MALPPEKATELKQIIHEQLTRMDVHGKIREVLAESLREEFRTESQQLSEEDLMKALRQRGIVDEVMKELHFMEDRNTRELTSTPKPATHFIDKEPRTLKKTNVDPTRRYLHLQVLSGKAFLEHLQESDPLPGQACSTFTLCLHFRNQRFRSKPVPCACEPDFQDGFLLEVHKDSLGDGSRMADATTMLSICDPVQLVLLKTDTSGETSLVSSHFLEWRSVLGTEKGATSLVVELLGVGAECKVSVGILNVKLELYPLLNKTLSQEVINTQFTLERQKTAEKERLFLVYAKQWWREYLQIRPSHNSRLVKIFAQDENWVNRPVCSYIRPLRAGRLLDTPRQAARFVNVLGYERAPTVGGGGKQEQWCTLLAFLCRNKGDCEDHCNLLCSLLLGFGLDAYVCVGTKGRGQAHTWVMTCGTDGAITFWESLTGHRYVHKPINPDDPPMVEQPKPLYPYKTIGCVFNHKRFLANSQPLDAVEVCVFDLHDESRWKPMSEEAIKSVCSPGSIASLPPFPPLCGSLLDAATESNEIELQLRVLVLEHRKDLGLTTVWDDQLSYLLSPALASYEIERTTGISAGNEEFQDCIRRAVPDGHTFKGFPIHFVHRNARRAFATCLRSPFCDEIISCRGDQMRLAVRVRVYTYPEAACAVWIMFACKYRSVL.

Belongs to the CEP76 family.

The protein localises to the cytoplasm. It is found in the cytoskeleton. It localises to the microtubule organizing center. The protein resides in the centrosome. Its subcellular location is the centriole. Centrosomal protein involved in regulation of centriole duplication. Required to limit centriole duplication to once per cell cycle by preventing centriole reduplication. This is Centrosomal protein of 76 kDa (cep76) from Xenopus tropicalis (Western clawed frog).